The chain runs to 128 residues: Large ribosomal subunit protein bL17 (128 aa).

This sequence belongs to the bacterial ribosomal protein bL17 family. As to quaternary structure, part of the 50S ribosomal subunit. Contacts protein L32.

The sequence is that of Large ribosomal subunit protein bL17 from Streptococcus mutans serotype c (strain ATCC 700610 / UA159).